The sequence spans 877 residues: Putative leucine-rich repeat receptor-like serine/threonine-protein kinase At2g19230 (877 aa).

An N-terminal signal peptide occupies residues 1–24 (MGNFNFLPLVSFASFVVVLVLVCA). Over 25–517 (QDQSGFVSID…RNKKTERKEY (493 aa)) the chain is Extracellular. N-linked (GlcNAc...) asparagine glycosylation is found at Asn-142, Asn-233, Asn-261, Asn-295, Asn-405, and Asn-420. LRR repeat units follow at residues 439–462 (PLQK…ANLP) and 463–484 (DLTE…KLLE). The chain crosses the membrane as a helical span at residues 518–538 (IIPSVASVTGLFFLLLALISF). Over 539–877 (WQFKKRQQSV…VDPGVLPQPR (339 aa)) the chain is Cytoplasmic. Positions 569–842 (NNFERVLGQG…QVVAELKESL (274 aa)) constitute a Protein kinase domain. ATP contacts are provided by residues 575–583 (LGQGGFGKV) and Lys-596. Tyr-641 is subject to Phosphotyrosine. Asp-692 (proton acceptor) is an active-site residue. Residue Ser-726 is modified to Phosphoserine. A phosphothreonine mark is found at Thr-727 and Thr-732.

It belongs to the protein kinase superfamily. Ser/Thr protein kinase family.

The protein resides in the cell membrane. The catalysed reaction is L-seryl-[protein] + ATP = O-phospho-L-seryl-[protein] + ADP + H(+). The enzyme catalyses L-threonyl-[protein] + ATP = O-phospho-L-threonyl-[protein] + ADP + H(+). This Arabidopsis thaliana (Mouse-ear cress) protein is Putative leucine-rich repeat receptor-like serine/threonine-protein kinase At2g19230.